We begin with the raw amino-acid sequence, 199 residues long: MPKVGMPEIRKPQLVKATMSVIDRVGLHAASISLISKEAGVSTGIINHYFGGKHGLLEETMREILRQLSATIKENLSQLPADAHHQRINAIIDGNFVGFQAENQVAKTWLAFWSYSMHDAQLKRLQRVNERRLLSHLKKELKALLDQDQAELVAHGIASLIDGIWLRGTLNPQGIDAEKARVIINDYLDKQLTFYSKLK.

The 61-residue stretch at 8–68 folds into the HTH tetR-type domain; sequence EIRKPQLVKA…ETMREILRQL (61 aa). Positions 31 to 50 form a DNA-binding region, H-T-H motif; it reads SISLISKEAGVSTGIINHYF.

Its pathway is amine and polyamine biosynthesis; betaine biosynthesis via choline pathway [regulation]. Its function is as follows. Repressor involved in the biosynthesis of the osmoprotectant glycine betaine. It represses transcription of the choline transporter BetT and the genes of BetAB involved in the synthesis of glycine betaine. This chain is HTH-type transcriptional regulator BetI, found in Vibrio campbellii (strain ATCC BAA-1116).